We begin with the raw amino-acid sequence, 241 residues long: Urease accessory protein UreF 1 (241 aa).

This sequence belongs to the UreF family. In terms of assembly, ureD, UreF and UreG form a complex that acts as a GTP-hydrolysis-dependent molecular chaperone, activating the urease apoprotein by helping to assemble the nickel containing metallocenter of UreC. The UreE protein probably delivers the nickel.

Its subcellular location is the cytoplasm. In terms of biological role, required for maturation of urease via the functional incorporation of the urease nickel metallocenter. In Brucella melitensis biotype 1 (strain ATCC 23456 / CCUG 17765 / NCTC 10094 / 16M), this protein is Urease accessory protein UreF 1.